Reading from the N-terminus, the 120-residue chain is V-type proton ATPase subunit F (120 aa).

It belongs to the V-ATPase F subunit family. V-ATPase is a heteromultimeric enzyme composed of a peripheral catalytic V1 complex (components A to H) attached to an integral membrane V0 proton pore complex (components: a, c, c', c'' and d).

Functionally, subunit of the peripheral V1 complex of vacuolar ATPase essential for assembly or catalytic function. V-ATPase is responsible for acidifying a variety of intracellular compartments in eukaryotic cells. In Dictyostelium discoideum (Social amoeba), this protein is V-type proton ATPase subunit F (vatF).